Reading from the N-terminus, the 99-residue chain is MAGSEGLMSVDYEVSGRVQGVFFRKYTQSEAKRLGLVGWVRNTSHGTVQGQAQGPAARVRELQEWLRKIGSPQSRISRAEFTNEKEIAALEHTDFQIRK.

Alanine 2 carries the N-acetylalanine modification. The region spanning 9 to 99 (SVDYEVSGRV…LEHTDFQIRK (91 aa)) is the Acylphosphatase-like domain. Active-site residues include arginine 24 and asparagine 42.

Belongs to the acylphosphatase family. As to expression, organ-common type isozyme is found in many different tissues.

The enzyme catalyses an acyl phosphate + H2O = a carboxylate + phosphate + H(+). The polypeptide is Acylphosphatase-1 (ACYP1) (Gallus gallus (Chicken)).